The chain runs to 89 residues: Small ribosomal subunit protein uS15 (89 aa).

Belongs to the universal ribosomal protein uS15 family. As to quaternary structure, part of the 30S ribosomal subunit. Forms a bridge to the 50S subunit in the 70S ribosome, contacting the 23S rRNA.

Its function is as follows. One of the primary rRNA binding proteins, it binds directly to 16S rRNA where it helps nucleate assembly of the platform of the 30S subunit by binding and bridging several RNA helices of the 16S rRNA. In terms of biological role, forms an intersubunit bridge (bridge B4) with the 23S rRNA of the 50S subunit in the ribosome. The protein is Small ribosomal subunit protein uS15 of Rhodococcus erythropolis (strain PR4 / NBRC 100887).